We begin with the raw amino-acid sequence, 345 residues long: Phosphate acyltransferase (345 aa).

The protein belongs to the PlsX family. Homodimer. Probably interacts with PlsY.

Its subcellular location is the cytoplasm. It carries out the reaction a fatty acyl-[ACP] + phosphate = an acyl phosphate + holo-[ACP]. Its pathway is lipid metabolism; phospholipid metabolism. Catalyzes the reversible formation of acyl-phosphate (acyl-PO(4)) from acyl-[acyl-carrier-protein] (acyl-ACP). This enzyme utilizes acyl-ACP as fatty acyl donor, but not acyl-CoA. This chain is Phosphate acyltransferase, found in Dichelobacter nodosus (strain VCS1703A).